Here is a 520-residue protein sequence, read N- to C-terminus: Cytochrome P450 monooxygenase oblB (520 aa).

Transmembrane regions (helical) follow at residues 17–37, 229–249, and 320–340; these read VAVI…RLFL, LFMG…SILA, and IGTG…HIVV. Cysteine 462 contacts heme.

The protein belongs to the cytochrome P450 family. The cofactor is heme.

The protein resides in the membrane. It participates in secondary metabolite biosynthesis; terpenoid biosynthesis. Its function is as follows. Cytochrome P450 monooxygenase; part of the gene cluster that mediates the biosynthesis of the sesterterpenes ophiobolins, fungal phytotoxins with potential anti-cancer activities. The first step of the pathway is performed by the sesterterpene synthase oblA that possesses both prenyl transferase and terpene cyclase activity, converting isopentenyl diphosphate and dimethylallyl diphosphate into geranylfarnesyl diphosphate (GFPP) and further converting GFPP into ophiobolin F, respectively. Other sesterterpenoids (C(25) terpenoids) are found as minor products of oblA. It is expected that ophiobolin F is then oxidized to ophiobolin A via ophiobolin C and ophiobolin B intermediates by the combined action of the cytochrome P450 monooxygenase oblB and the FAD-dependent oxidoreductase oblC. Although oblB catalyzes multistep oxygenations at C5 and C21/C7 in a relatively efficient manner, it is unable to convert ophiobolin F to ophiobolin C and produces instead several unexpected derivatives. The protein is Cytochrome P450 monooxygenase oblB of Aspergillus clavatus (strain ATCC 1007 / CBS 513.65 / DSM 816 / NCTC 3887 / NRRL 1 / QM 1276 / 107).